The following is a 691-amino-acid chain: Elongation factor G (691 aa).

The tr-type G domain occupies 8–283 (EDYRNFGIMA…AVVDYLPSPA (276 aa)). Residues 17-24 (AHIDAGKT), 81-85 (DTPGH), and 135-138 (NKMD) contribute to the GTP site.

Belongs to the TRAFAC class translation factor GTPase superfamily. Classic translation factor GTPase family. EF-G/EF-2 subfamily.

It localises to the cytoplasm. Catalyzes the GTP-dependent ribosomal translocation step during translation elongation. During this step, the ribosome changes from the pre-translocational (PRE) to the post-translocational (POST) state as the newly formed A-site-bound peptidyl-tRNA and P-site-bound deacylated tRNA move to the P and E sites, respectively. Catalyzes the coordinated movement of the two tRNA molecules, the mRNA and conformational changes in the ribosome. This chain is Elongation factor G, found in Methylobacterium radiotolerans (strain ATCC 27329 / DSM 1819 / JCM 2831 / NBRC 15690 / NCIMB 10815 / 0-1).